A 475-amino-acid chain; its full sequence is Aspartyl/glutamyl-tRNA(Asn/Gln) amidotransferase subunit B (475 aa).

It belongs to the GatB/GatE family. GatB subfamily. As to quaternary structure, heterotrimer of A, B and C subunits.

It carries out the reaction L-glutamyl-tRNA(Gln) + L-glutamine + ATP + H2O = L-glutaminyl-tRNA(Gln) + L-glutamate + ADP + phosphate + H(+). The enzyme catalyses L-aspartyl-tRNA(Asn) + L-glutamine + ATP + H2O = L-asparaginyl-tRNA(Asn) + L-glutamate + ADP + phosphate + 2 H(+). Allows the formation of correctly charged Asn-tRNA(Asn) or Gln-tRNA(Gln) through the transamidation of misacylated Asp-tRNA(Asn) or Glu-tRNA(Gln) in organisms which lack either or both of asparaginyl-tRNA or glutaminyl-tRNA synthetases. The reaction takes place in the presence of glutamine and ATP through an activated phospho-Asp-tRNA(Asn) or phospho-Glu-tRNA(Gln). This Lysinibacillus sphaericus (strain C3-41) protein is Aspartyl/glutamyl-tRNA(Asn/Gln) amidotransferase subunit B.